Consider the following 402-residue polypeptide: N-acetyllactosaminide beta-1,6-N-acetylglucosaminyl-transferase (402 aa).

Over 1–7 (MMGSWKH) the chain is Cytoplasmic. Residues 8-23 (CLFSASLISALIFVFV) traverse the membrane as a helical; Signal-anchor for type II membrane protein segment. Topologically, residues 24–400 (YNTELWENKR…QSETAIQPSW (377 aa)) are lumenal. The N-linked (GlcNAc...) asparagine glycan is linked to N41.

It belongs to the glycosyltransferase 14 family. Expressed in lens epithelium cells. In terms of tissue distribution, expressed in reticulocytes.

The protein localises to the golgi apparatus membrane. The enzyme catalyses a beta-D-Gal-(1-&gt;4)-beta-D-GlcNAc-(1-&gt;3)-beta-D-Gal-(1-&gt;4)-beta-D-GlcNAc derivative + UDP-N-acetyl-alpha-D-glucosamine = a beta-D-Gal-(1-&gt;4)-beta-D-GlcNAc-(1-&gt;3)-[beta-D-GlcNAc-(1-&gt;6)]-beta-D-Gal-(1-&gt;4)-N-acetyl-beta-D-glucosaminyl derivative + UDP + H(+). It participates in protein modification; protein glycosylation. Functionally, branching enzyme that converts linear into branched poly-N-acetyllactosaminoglycans. Introduces the blood group I antigen during embryonic development. It is closely associated with the development and maturation of erythroid cells. Determines the expression of the blood group I antigen in erythrocytes. The sequence is that of N-acetyllactosaminide beta-1,6-N-acetylglucosaminyl-transferase (GCNT2) from Homo sapiens (Human).